Consider the following 45-residue polypeptide: MDFALLLAKLPEAYQIFDPLVDVLPLIPLFFLLLAFVWQAAVGFK.

Residues 1–8 (MDFALLLA) constitute a propeptide that is removed on maturation. A helical transmembrane segment spans residues 24-44 (LPLIPLFFLLLAFVWQAAVGF).

The protein belongs to the PsbK family. In terms of assembly, PSII is composed of 1 copy each of membrane proteins PsbA, PsbB, PsbC, PsbD, PsbE, PsbF, PsbH, PsbI, PsbJ, PsbK, PsbL, PsbM, PsbT, PsbX, PsbY, PsbZ, Psb30/Ycf12, peripheral proteins PsbO, CyanoQ (PsbQ), PsbU, PsbV and a large number of cofactors. It forms dimeric complexes.

The protein resides in the cellular thylakoid membrane. In terms of biological role, one of the components of the core complex of photosystem II (PSII). PSII is a light-driven water:plastoquinone oxidoreductase that uses light energy to abstract electrons from H(2)O, generating O(2) and a proton gradient subsequently used for ATP formation. It consists of a core antenna complex that captures photons, and an electron transfer chain that converts photonic excitation into a charge separation. The protein is Photosystem II reaction center protein K of Gloeothece citriformis (strain PCC 7424) (Cyanothece sp. (strain PCC 7424)).